The following is a 467-amino-acid chain: UDP-N-acetylmuramate--L-alanine ligase (467 aa).

114–120 (GTHGKTT) is an ATP binding site.

The protein belongs to the MurCDEF family.

Its subcellular location is the cytoplasm. The catalysed reaction is UDP-N-acetyl-alpha-D-muramate + L-alanine + ATP = UDP-N-acetyl-alpha-D-muramoyl-L-alanine + ADP + phosphate + H(+). Its pathway is cell wall biogenesis; peptidoglycan biosynthesis. Its function is as follows. Cell wall formation. This is UDP-N-acetylmuramate--L-alanine ligase from Bradyrhizobium sp. (strain ORS 278).